Consider the following 1020-residue polypeptide: Sodium/potassium-transporting ATPase subunit alpha-2 (1020 aa).

A propeptide spanning residues 1-5 (MGRGA) is cleaved from the precursor. Residues 1–31 (MGRGAGREYSPAATTAENGGGKKKQKEKELD) form a disordered region. Residues 6–85 (GREYSPAATT…NALTPPPTTP (80 aa)) lie on the Cytoplasmic side of the membrane. A Phosphoserine modification is found at Ser10. The interaction with phosphoinositide-3 kinase stretch occupies residues 80–82 (PPP). The helical transmembrane segment at 86–106 (EWVKFCRQLFGGFSILLWIGA) threads the bilayer. The Extracellular segment spans residues 107 to 129 (ILCFLAYGIQAAMEDEPSNDNLY). Residues 130-150 (LGVVLAAVVIVTGCFSYYQEA) form a helical membrane-spanning segment. Residues 151–286 (KSSKIMDSFK…VGRTPIAMEI (136 aa)) lie on the Cytoplasmic side of the membrane. Polar residues predominate over residues 212 to 227 (DNSSLTGESEPQTRSP). The segment at 212-231 (DNSSLTGESEPQTRSPEFTH) is disordered. Residues 287–306 (EHFIQLITGVAVFLGVSFFV) traverse the membrane as a helical segment. Residues 307 to 318 (LSLILGYSWLEA) are Extracellular-facing. The helical transmembrane segment at 319–336 (VIFLIGIIVANVPEGLLA) threads the bilayer. Topologically, residues 337 to 769 (TVTVCLTLTA…EEGRLIFDNL (433 aa)) are cytoplasmic. Catalysis depends on Asp374, which acts as the 4-aspartylphosphate intermediate. Phosphoserine occurs at positions 439, 450, 496, and 559. Thr570 is modified (phosphothreonine). Phosphoserine occurs at positions 587 and 672. Mg(2+) is bound by residues Asp714 and Asp718. Residues 770-789 (KKSIAYTLTSNIPEITPFLL) form a helical membrane-spanning segment. Topologically, residues 790-799 (FIIANIPLPL) are extracellular. The chain crosses the membrane as a helical span at residues 800-820 (GTVTILCIDLGTDMVPAISLA). The Cytoplasmic portion of the chain corresponds to 821–840 (YEAAESDIMKRQPRNSQTDK). Ser826 is modified (phosphoserine). Residues 841-863 (LVNERLISMAYGQIGMIQALGGF) traverse the membrane as a helical segment. Residues 864-915 (FTYFVILAENGFLPSRLLGIRLDWDDRTMNDLEDSYGQEWTYEQRKVVEFTC) are Extracellular-facing. The chain crosses the membrane as a helical span at residues 916–935 (HTAFFASIVVVQWADLIICK). The Cytoplasmic portion of the chain corresponds to 936 to 948 (TRRNSVFQQGMKN). Ser940 carries the phosphoserine; by PKA modification. Residues 949 to 967 (KILIFGLLEETALAAFLSY) traverse the membrane as a helical segment. At 968 to 982 (CPGMGVALRMYPLKV) the chain is on the extracellular side. The helical transmembrane segment at 983-1003 (TWWFCAFPYSLLIFIYDEVRK) threads the bilayer. The Cytoplasmic segment spans residues 1004–1020 (LILRRYPGGWVEKETYY).

Belongs to the cation transport ATPase (P-type) (TC 3.A.3) family. Type IIC subfamily. The sodium/potassium-transporting ATPase is composed of a catalytic alpha subunit, an auxiliary non-catalytic beta subunit and an additional regulatory subunit. Interacts with regulatory subunit FXYD1.

The protein localises to the membrane. It localises to the cell membrane. It catalyses the reaction K(+)(out) + Na(+)(in) + ATP + H2O = K(+)(in) + Na(+)(out) + ADP + phosphate + H(+). In terms of biological role, this is the catalytic component of the active enzyme, which catalyzes the hydrolysis of ATP coupled with the exchange of sodium and potassium ions across the plasma membrane. This action creates the electrochemical gradient of sodium and potassium, providing the energy for active transport of various nutrients. In Homo sapiens (Human), this protein is Sodium/potassium-transporting ATPase subunit alpha-2 (ATP1A2).